The chain runs to 564 residues: Eukaryotic translation initiation factor 3 subunit L (564 aa).

Serine 2 is subject to N-acetylserine. A Phosphoserine modification is found at serine 21. One can recognise a PCI domain in the interval 331–537; that stretch reads DAIRVFANIL…IHIADTKVAR (207 aa). An N6-acetyllysine mark is found at lysine 465 and lysine 549.

Belongs to the eIF-3 subunit L family. As to quaternary structure, component of the eukaryotic translation initiation factor 3 (eIF-3) complex, which is composed of 13 subunits: EIF3A, EIF3B, EIF3C, EIF3D, EIF3E, EIF3F, EIF3G, EIF3H, EIF3I, EIF3J, EIF3K, EIF3L and EIF3M. The eIF-3 complex appears to include 3 stable modules: module A is composed of EIF3A, EIF3B, EIF3G and EIF3I; module B is composed of EIF3F, EIF3H, and EIF3M; and module C is composed of EIF3C, EIF3D, EIF3E, EIF3K and EIF3L. EIF3C of module C binds EIF3B of module A and EIF3H of module B, thereby linking the three modules. EIF3J is a labile subunit that binds to the eIF-3 complex via EIF3B. The eIF-3 complex interacts with RPS6KB1 under conditions of nutrient depletion. Mitogenic stimulation leads to binding and activation of a complex composed of MTOR and RPTOR, leading to phosphorylation and release of RPS6KB1 and binding of EIF4B to eIF-3. Interacts with RRN3.

The protein resides in the cytoplasm. In terms of biological role, component of the eukaryotic translation initiation factor 3 (eIF-3) complex, which is required for several steps in the initiation of protein synthesis. The eIF-3 complex associates with the 40S ribosome and facilitates the recruitment of eIF-1, eIF-1A, eIF-2:GTP:methionyl-tRNAi and eIF-5 to form the 43S pre-initiation complex (43S PIC). The eIF-3 complex stimulates mRNA recruitment to the 43S PIC and scanning of the mRNA for AUG recognition. The eIF-3 complex is also required for disassembly and recycling of post-termination ribosomal complexes and subsequently prevents premature joining of the 40S and 60S ribosomal subunits prior to initiation. The eIF-3 complex specifically targets and initiates translation of a subset of mRNAs involved in cell proliferation, including cell cycling, differentiation and apoptosis, and uses different modes of RNA stem-loop binding to exert either translational activation or repression. In Pan troglodytes (Chimpanzee), this protein is Eukaryotic translation initiation factor 3 subunit L.